A 159-amino-acid chain; its full sequence is Ribonuclease H (159 aa).

An RNase H type-1 domain is found at 4–145; that stretch reads THKQVNIYTD…CDKLARDAAE (142 aa). Residues Asp13, Glu51, Asp73, and Asp137 each contribute to the Mg(2+) site.

The protein belongs to the RNase H family. As to quaternary structure, monomer. Mg(2+) is required as a cofactor.

Its subcellular location is the cytoplasm. It carries out the reaction Endonucleolytic cleavage to 5'-phosphomonoester.. In terms of biological role, endonuclease that specifically degrades the RNA of RNA-DNA hybrids. In Shewanella denitrificans (strain OS217 / ATCC BAA-1090 / DSM 15013), this protein is Ribonuclease H.